The following is a 1426-amino-acid chain: A disintegrin and metalloproteinase with thrombospondin motifs 13 (1426 aa).

A signal peptide spans 1–33; that stretch reads MSQLCLWLTCQPCYAVSVRGILTGAIFILGCWG. A propeptide spanning residues 34 to 76 is cleaved from the precursor; that stretch reads LSDFQKSLLQDLEPKDVSSYFGHHAAPFTGHPPSHLQRLRRRR. Residues 74 to 291 form the Peptidase M12B domain; that stretch reads RRRTLEDILH…GQMHCFQDPP (218 aa). E85 provides a ligand contact to Ca(2+). N-linked (GlcNAc...) asparagine glycosylation is found at N144 and N148. 3 disulfide bridges follow: C157-C210, C204-C286, and C246-C270. The Ca(2+) site is built by D175, D184, E186, D189, and E214. A Zn(2+)-binding site is contributed by H226. Residue E227 is part of the active site. Zn(2+) is bound by residues H230 and H236. T281 and D289 together coordinate Ca(2+). In terms of domain architecture, Disintegrin spans 295–388; sequence SGLTRHQLMA…LAELAPVAAV (94 aa). 11 cysteine pairs are disulfide-bonded: C316–C342, C327–C352, C337–C371, C365–C376, C401–C438, C405–C443, C416–C428, C488–C527, C513–C532, C537–C553, and C550–C560. One can recognise a TSP type-1 1 domain in the interval 389 to 444; sequence HGHWSSWGPHSPCSRSCGGGVITRRRWCNNPRPAFGGRACVGEDLQAKMCNTQACE. Positions 445–561 are cysteine-rich; the sequence is KTQLEFMSEQ…VCGGDNSTCS (117 aa). Positions 503 to 505 match the Cell attachment site motif; the sequence is RGD. The interval 556 to 685 is spacer; that stretch reads DNSTCSSRNG…PDITFSYFQL (130 aa). 4 N-linked (GlcNAc...) asparagine glycosylation sites follow: N557, N564, N584, and N619. TSP type-1 domains are found at residues 687–746, 747–810, 808–871, 904–957, 958–1019, 1020–1078, and 1079–1137; these read QQAA…VSAP, CSPY…QPCP, PCPT…SLCS, WTPL…RARP, CPAR…EPCP, ARWK…IADC, and AFRW…GPCA. O-linked (Fuc...) serine glycans are attached at residues S703 and S762. The N-linked (GlcNAc...) asparagine glycan is linked to N834. The O-linked (Fuc...) serine glycan is linked to S914. The O-linked (Fuc...) threonine glycan is linked to T973. Residue S1033 is glycosylated (O-linked (Fuc...) serine). N-linked (GlcNAc...) asparagine glycosylation occurs at N1057. An O-linked (Fuc...) serine glycan is attached at S1093. 2 consecutive CUB domains span residues 1195-1302 and 1293-1426; these read ACGR…FYKE and QPAP…LALS.

Zn(2+) serves as cofactor. Requires Ca(2+) as cofactor. Post-translationally, the precursor is processed by a furin endopeptidase which cleaves off the pro-domain. In terms of processing, O-glycosylated. O-fucosylated by POFUT2 on a serine or a threonine residue found within the consensus sequence C1-X(2)-(S/T)-C2-G of the TSP type-1 repeat domains where C1 and C2 are the first and second cysteine residue of the repeat, respectively. Fucosylated repeats can then be further glycosylated by the addition of a beta-1,3-glucose residue by the glucosyltransferase, B3GALTL. Fucosylation mediates the efficient secretion of ADAMTS13. May also be C-glycosylated on tryptophan residues within the consensus sequence W-X-X-W of the TPRs, and also N-glycosylated. These other glycosylations can also facilitate secretion. Plasma. Expression is consistently high in liver, medium in lung and spleen, low in skeletal muscle and undetectable in heart, brain, kidney and testis.

It is found in the secreted. The catalysed reaction is The enzyme cleaves the von Willebrand factor at bond 842-Tyr-|-Met-843 within the A2 domain.. Zinc and calcium ions cooperatively modulate enzyme activity. The cleavage of the pro-domain is not required for protease activity. Dependence on calcium for proteolytic activity is mediated by the high affinity site. Cleaves the vWF multimers in plasma into smaller forms thereby controlling vWF-mediated platelet thrombus formation. This is A disintegrin and metalloproteinase with thrombospondin motifs 13 (Adamts13) from Mus musculus (Mouse).